Reading from the N-terminus, the 364-residue chain is Fructose-1,6-bisphosphatase class 1 2 (364 aa).

4 residues coordinate Mg(2+): E101, D123, L125, and D126. Residues 126–129 (DGSS) and N218 each bind substrate. Position 290 (E290) interacts with Mg(2+).

Belongs to the FBPase class 1 family. Homotetramer. It depends on Mg(2+) as a cofactor.

The protein resides in the cytoplasm. It carries out the reaction beta-D-fructose 1,6-bisphosphate + H2O = beta-D-fructose 6-phosphate + phosphate. The protein operates within carbohydrate biosynthesis; gluconeogenesis. In Cupriavidus taiwanensis (strain DSM 17343 / BCRC 17206 / CCUG 44338 / CIP 107171 / LMG 19424 / R1) (Ralstonia taiwanensis (strain LMG 19424)), this protein is Fructose-1,6-bisphosphatase class 1 2.